We begin with the raw amino-acid sequence, 353 residues long: Histidine biosynthesis bifunctional protein HisB (353 aa).

A histidinol-phosphatase region spans residues 1-164; that stretch reads MKNKILFIDR…HITKYIIKHN (164 aa). Residue Asp9 is the Nucleophile of the active site. 2 residues coordinate Mg(2+): Asp9 and Asp11. The active-site Proton donor is the Asp11. 4 residues coordinate Zn(2+): Cys93, His95, Cys101, and Cys103. Asp128 is a Mg(2+) binding site. An imidazoleglycerol-phosphate dehydratase region spans residues 165–353; sequence RYAEIIRRTK…NMLPTSKGIL (189 aa).

The protein in the N-terminal section; belongs to the histidinol-phosphatase family. In the C-terminal section; belongs to the imidazoleglycerol-phosphate dehydratase family. Mg(2+) is required as a cofactor. Requires Zn(2+) as cofactor.

It is found in the cytoplasm. The enzyme catalyses D-erythro-1-(imidazol-4-yl)glycerol 3-phosphate = 3-(imidazol-4-yl)-2-oxopropyl phosphate + H2O. The catalysed reaction is L-histidinol phosphate + H2O = L-histidinol + phosphate. It participates in amino-acid biosynthesis; L-histidine biosynthesis; L-histidine from 5-phospho-alpha-D-ribose 1-diphosphate: step 6/9. It functions in the pathway amino-acid biosynthesis; L-histidine biosynthesis; L-histidine from 5-phospho-alpha-D-ribose 1-diphosphate: step 8/9. The protein is Histidine biosynthesis bifunctional protein HisB of Buchnera aphidicola subsp. Acyrthosiphon pisum (strain Tuc7).